The primary structure comprises 53 residues: Small ribosomal subunit protein uS14m (53 aa).

It belongs to the universal ribosomal protein uS14 family.

The protein resides in the mitochondrion. This Bigelowiella natans (Pedinomonas minutissima) protein is Small ribosomal subunit protein uS14m (RPS14).